The chain runs to 349 residues: MSDFQREQRKNEHVEIAMAQSDAMHSDFDKMRFVHHSIPSINVNDIDLTSQTPDLTMAYPVYINAMTGGSEWTKNINEKLAVVARETGLAMAVGSTHAALRNPRMAETFTIARKMNPEGMIFSNVGADVPVEKALEAVELLEAQALQIHVNSPQELVMPEGNREFVTWLDNIASIVSRVSVPVIIKEVGFGMSKELMHDLQQIGVKYVDVSGKGGTNFVDIENERRANKDMDYLSSWGQSTVESLLETTAYQSEISVFASGGLRTPLDAIKSLALGAKATGMSRPFLNQVENNGIAHTVAYVESFIEHMKSIMTMLDAKNIDDLTQKQIVFSPEILSWIEQRNLNIHRG.

Position 9–10 (Arg-9–Lys-10) interacts with substrate. FMN-binding positions include Ala-65 to Thr-67, Ser-95, and Asn-124. Ser-95–His-97 contributes to the substrate binding site. Gln-154 contacts substrate. Position 155 (Glu-155) interacts with Mg(2+). Residues Lys-186, Ser-211, Thr-216, Gly-262–Arg-264, and Ser-283–Arg-284 contribute to the FMN site.

This sequence belongs to the IPP isomerase type 2 family. Homooctamer. Dimer of tetramers. Requires FMN as cofactor. It depends on NADPH as a cofactor. Mg(2+) serves as cofactor.

It is found in the cytoplasm. The catalysed reaction is isopentenyl diphosphate = dimethylallyl diphosphate. Involved in the biosynthesis of isoprenoids. Catalyzes the 1,3-allylic rearrangement of the homoallylic substrate isopentenyl (IPP) to its allylic isomer, dimethylallyl diphosphate (DMAPP). The chain is Isopentenyl-diphosphate delta-isomerase from Staphylococcus aureus (strain USA300 / TCH1516).